The primary structure comprises 1193 residues: MSSIRVVCRFRPQNKLELAQGGDSIVSIAPENDSVTINGSESNHSFSFDYVFPSNTTQRDVYDHAAKPVIEDIMAGYNGTLFVYGQTGSGKTFSMTGINDPNGDQELRGIVPRMIETVFEFISNADENIEFIVKASYIEIYMERIRDLLDTRKDNLKVREEKGKGVWVEGTSEVYIYREEDILDVINTGISNRAIAETRMNAESSRSHSIFILTIQQKNLKVGSIKTGKLYLVDLAGSEKISKTGAQGTTLDEAKMINKSLSSLGNVINALTDGKSTHIPYRDSKLTRVLQESLGGNSRTTLIINCSPSSYNEAETISTLRFGSRAKNIKNKAKINQERSAAELKILLSKAENEIENLKGYIKELETVSGVTVSNLKSSGSGSGSGSGSSSSSSGSSGGSGSGGSSNLSNSVNSTSNLNTSSNTSSSNVNANANVITTSVSAPTSPKDTELIKVLQEKCIQLEKQLFKKEEEKKEILEQLEQQQEQIQDKDQEIEGLNSMIESSNNINSLYQNSTNENSVLNVQLSELKLALEKSRFEATEQSLTIEGLNEENQSIKSQLEILKDRIAQSGDSSIASLVPSTPKSSAEMDPLATASKHADEWNEKAEQLKLLQRTPSKAVGSSKSNTATSSPIISLNISESDNIGSGATTTTNNNNATITPATSSNNNVEQQQQQVEELLPSVNEQLLESENQKLQKRIQEIELEFETYKIAKENLTMQKDLEIEQLLESQRISSSFVVDPRNLDDELPAEMMLQAEQIRKLIAENSEQKVHFEATKNENSKLKNRIEMIEEETRQRMEEELNVLREQTNQKLSEFGSLKESLIRDLENRCQKVIDLELVLDELQDRIVTLNERLKRVNKPGGGDQEAAFVQSKLDEITAVKHQLVIENNKHKTEVERLKKLLSHRGEHILILEKTMAINQESLFKLALNHNALTIEHDRAKNELEKLNNLLSQVGVDAQNTGGARVARVIRGGGGNNQLKKFNHSSSSSTSSSSALNHSSINNNHTTPTPLSANLYSNTKRSTKELNTGVKAEPLSLSGSPFNTSIPSSPNHTSSNNINNNSNNNNNNNNNNNIGNSGNIGGVGNNNSSISNSNNNSSSNLNANLNGNTPVKITSENSSSSLWNIFKKKSPSSTPPSSTNNLSPQSPQTPSHLSADGSGNISPNLSPPIPVNFSYTPAVVTSSTINKDQQKD.

Positions 3–329 (SIRVVCRFRP…LRFGSRAKNI (327 aa)) constitute a Kinesin motor domain. 85–92 (GQTGSGKT) lines the ATP pocket. Disordered regions lie at residues 377 to 429 (KSSG…SSNV), 573 to 600 (SSIASLVPSTPKSSAEMDPLATASKHAD), 611 to 630 (LLQRTPSKAVGSSKSNTATS), 638 to 665 (ISESDNIGSGATTTTNNNNATITPATSS), 973 to 1016 (GGGG…SANL), 1032 to 1114 (KAEP…PVKI), and 1127 to 1193 (FKKK…QQKD). Residues 405–429 (SSNLSNSVNSTSNLNTSSNTSSSNV) are compositionally biased toward low complexity. Positions 450-962 (ELIKVLQEKC…SQVGVDAQNT (513 aa)) form a coiled coil. Polar residues-rich tracts occupy residues 573–585 (SSIASLVPSTPKS) and 614–630 (RTPSKAVGSSKSNTATS). 2 stretches are compositionally biased toward low complexity: residues 643–665 (NIGSGATTTTNNNNATITPATSS) and 985–1006 (HSSSSSTSSSSALNHSSINNNH). The span at 1007–1016 (TTPTPLSANL) shows a compositional bias: polar residues. 3 stretches are compositionally biased toward low complexity: residues 1044–1078 (NTSIPSSPNHTSSNNINNNSNNNNNNNNNNNIGNS), 1086–1109 (NNNSSISNSNNNSSSNLNANLNGN), and 1132–1149 (PSSTPPSSTNNLSPQSPQ). Polar residues-rich tracts occupy residues 1150–1165 (TPSHLSADGSGNISPN) and 1174–1193 (FSYTPAVVTSSTINKDQQKD).

It belongs to the TRAFAC class myosin-kinesin ATPase superfamily. Kinesin family. Kinesin subfamily. In terms of assembly, dimer.

The protein resides in the cytoplasm. It localises to the cytoskeleton. In terms of biological role, microtubule-associated force-producing protein that plays a role in organelle transport. Its motor activity is directed toward the microtubule's plus end. The maximal velocity in an inverted motility assay (moving microtubules on fixed motors) was 1.96 um/s. The polypeptide is Kinesin-related protein 3 (kif3) (Dictyostelium discoideum (Social amoeba)).